We begin with the raw amino-acid sequence, 1192 residues long: Methionine synthase (1192 aa).

The Hcy-binding domain occupies 1 to 312 (MTAADKHLYD…AHIREVAAAV (312 aa)). The Zn(2+) site is built by Cys231, Cys297, and Cys298. Residues 343–601 (VLVIGERTNA…RIPEEQRNVA (259 aa)) enclose the Pterin-binding domain. The region spanning 635-728 (RLAELAGLPL…HMERSDDDSG (94 aa)) is the B12-binding N-terminal domain. A B12-binding domain is found at 729 to 866 (KGRIVLATVK…SAKRGEAPDE (138 aa)). Methylcob(III)alamin-binding positions include 739 to 743 (GDVHD), His742, Ser787, and Ala845. The tract at residues 860 to 904 (RGEAPDENSPEAIKAREKEAERKARHQRSKRIAAQRKAAEEPVEV) is disordered. Residues 872-881 (IKAREKEAER) show a composition bias toward basic and acidic residues. Basic residues predominate over residues 882 to 893 (KARHQRSKRIAA). The AdoMet activation domain maps to 893–1192 (AQRKAAEEPV…HHPEAKYFNV (300 aa)). S-adenosyl-L-methionine contacts are provided by residues Asp940, Arg1135, and 1189-1190 (YF).

This sequence belongs to the vitamin-B12 dependent methionine synthase family. The cofactor is methylcob(III)alamin. Requires Zn(2+) as cofactor.

It carries out the reaction (6S)-5-methyl-5,6,7,8-tetrahydrofolate + L-homocysteine = (6S)-5,6,7,8-tetrahydrofolate + L-methionine. It functions in the pathway amino-acid biosynthesis; L-methionine biosynthesis via de novo pathway; L-methionine from L-homocysteine (MetH route): step 1/1. Catalyzes the transfer of a methyl group from methyl-cobalamin to homocysteine, yielding enzyme-bound cob(I)alamin and methionine. Subsequently, remethylates the cofactor using methyltetrahydrofolate. This is Methionine synthase (metH) from Mycobacterium tuberculosis (strain ATCC 25618 / H37Rv).